A 151-amino-acid polypeptide reads, in one-letter code: Large ribosomal subunit protein uL22 (151 aa).

The protein belongs to the universal ribosomal protein uL22 family. Part of the 50S ribosomal subunit.

This protein binds specifically to 23S rRNA. It makes multiple contacts with different domains of the 23S rRNA in the assembled 50S subunit and ribosome. In terms of biological role, the globular domain of the protein is located near the polypeptide exit tunnel on the outside of the subunit, while an extended beta-hairpin is found that lines the wall of the exit tunnel in the center of the 70S ribosome. The chain is Large ribosomal subunit protein uL22 from Thermofilum pendens (strain DSM 2475 / Hrk 5).